The following is a 922-amino-acid chain: Hexokinase-3 (922 aa).

The interval 1–23 (MATIGPSGLHPGERASVCPHEGV) is disordered. Hexokinase domains lie at 25–469 (RPSG…MVTA) and 475–911 (AAHR…LVTA). Residues 82 to 218 (HGTEQGDFLV…TYRIDVVAMV (137 aa)) are hexokinase small subdomain 1. 93 to 100 (ELGATGAS) contacts ATP. Residue 93-102 (ELGATGASLR) coordinates D-glucose 6-phosphate. Residues S166, 183–184 (TK), and 219–220 (ND) each bind D-glucose. Positions 219–458 (NDTVGTMMGC…CDVSFIPSVD (240 aa)) are hexokinase large subdomain 1. D-glucose 6-phosphate contacts are provided by D220 and T243. D-glucose contacts are provided by residues N246, E271, and 302 to 305 (QRFE). 424–426 (GGR) contributes to the D-glucose 6-phosphate binding site. ATP-binding positions include 436 to 437 (RI) and 540 to 545 (DLGGTN). A hexokinase small subdomain 2 region spans residues 529–660 (DGSERGDFLA…AVELNVVAIV (132 aa)). Position 540 to 544 (540 to 544 (DLGGT)) interacts with D-glucose 6-phosphate. Residues 608–609 (SF), 625–626 (TK), and 661–662 (ND) each bind D-glucose. The segment at 661-900 (NDTVGTMMSC…CTVTFLQSED (240 aa)) is hexokinase large subdomain 2. The D-glucose 6-phosphate site is built by D662 and T685. T685 contacts ATP. D-glucose-binding positions include 687 to 688 (TN), E713, and E747. Residues 752–753 (GM), 789–793 (TKFLS), and 868–872 (TLYKL) each bind ATP. D-glucose 6-phosphate is bound by residues 866–868 (DGT) and S902.

This sequence belongs to the hexokinase family.

It carries out the reaction a D-hexose + ATP = a D-hexose 6-phosphate + ADP + H(+). The enzyme catalyses D-fructose + ATP = D-fructose 6-phosphate + ADP + H(+). The catalysed reaction is D-glucose + ATP = D-glucose 6-phosphate + ADP + H(+). The protein operates within carbohydrate metabolism; hexose metabolism. Its pathway is carbohydrate degradation; glycolysis; D-glyceraldehyde 3-phosphate and glycerone phosphate from D-glucose: step 1/4. With respect to regulation, hexokinase is an allosteric enzyme inhibited by its product D-glucose 6-phosphate. In terms of biological role, catalyzes the phosphorylation of hexose, such as D-glucose and D-fructose, to hexose 6-phosphate (D-glucose 6-phosphate and D-fructose 6-phosphate, respectively). Mediates the initial step of glycolysis by catalyzing phosphorylation of D-glucose to D-glucose 6-phosphate. The polypeptide is Hexokinase-3 (Mus musculus (Mouse)).